The chain runs to 338 residues: HTH-type transcriptional regulator SyrM 1 (338 aa).

One can recognise an HTH lysR-type domain in the interval 35–92 (LDLNTLLALEALLEHRNVTQAARHLGLSQPSVSRALIRLRGVFNDDLLVRGSSGMVPT). The segment at residues 52–72 (VTQAARHLGLSQPSVSRALIR) is a DNA-binding region (H-T-H motif).

Belongs to the LysR transcriptional regulatory family.

Functionally, transcriptional activator that regulates the expression of genes involved in symbiosis. Among other targets it acts on the nolWBTUV operon. In Sinorhizobium fredii (strain NBRC 101917 / NGR234), this protein is HTH-type transcriptional regulator SyrM 1 (syrM1).